A 38-amino-acid polypeptide reads, in one-letter code: Photosystem II reaction center protein L (38 aa).

A helical membrane pass occupies residues 17-37 (SLFIGLLLVLVLALLFSSYFF).

Belongs to the PsbL family. PSII is composed of 1 copy each of membrane proteins PsbA, PsbB, PsbC, PsbD, PsbE, PsbF, PsbH, PsbI, PsbJ, PsbK, PsbL, PsbM, PsbT, PsbX, PsbY, PsbZ, Psb30/Ycf12, peripheral proteins PsbO, CyanoQ (PsbQ), PsbU, PsbV and a large number of cofactors. It forms dimeric complexes.

It localises to the cellular thylakoid membrane. Functionally, one of the components of the core complex of photosystem II (PSII). PSII is a light-driven water:plastoquinone oxidoreductase that uses light energy to abstract electrons from H(2)O, generating O(2) and a proton gradient subsequently used for ATP formation. It consists of a core antenna complex that captures photons, and an electron transfer chain that converts photonic excitation into a charge separation. This subunit is found at the monomer-monomer interface and is required for correct PSII assembly and/or dimerization. In Acaryochloris marina (strain MBIC 11017), this protein is Photosystem II reaction center protein L.